We begin with the raw amino-acid sequence, 99 residues long: uncharacterized protein (99 aa).

The helical transmembrane segment at 76 to 96 threads the bilayer; that stretch reads VLLGLASGMIGGIIGMFMWVL.

Its subcellular location is the host membrane. This is an uncharacterized protein from Haemophilus phage HP1 (strain HP1c1) (Bacteriophage HP1).